The chain runs to 810 residues: Lon protease (810 aa).

The 194-residue stretch at 16–209 (YPVPPLRDIV…RVYAFMEGEI (194 aa)) folds into the Lon N-terminal domain. 361–368 (GPPGVGKT) contributes to the ATP binding site. The region spanning 598–779 (EDLVGVTTGL…DDVLKHALVR (182 aa)) is the Lon proteolytic domain. Catalysis depends on residues Ser-685 and Lys-728.

It belongs to the peptidase S16 family. As to quaternary structure, homohexamer. Organized in a ring with a central cavity.

Its subcellular location is the cytoplasm. It carries out the reaction Hydrolysis of proteins in presence of ATP.. Its function is as follows. ATP-dependent serine protease that mediates the selective degradation of mutant and abnormal proteins as well as certain short-lived regulatory proteins. Required for cellular homeostasis and for survival from DNA damage and developmental changes induced by stress. Degrades polypeptides processively to yield small peptide fragments that are 5 to 10 amino acids long. Binds to DNA in a double-stranded, site-specific manner. Involved in iron uptake. In Azospirillum brasilense, this protein is Lon protease.